Here is a 310-residue protein sequence, read N- to C-terminus: MKIIPIASESLGVRSLAVFVKVGKRGILIDPGAALGPKRYSLSPANSEMAALQLARSKIQEFAKKADVITISHYHYDHHTPFFEGIYESSSPEIAKELYSGKILLIKHPTQNINASQKRRAHEFLKNVEGIAKKIEYGDSKTFDFGDFKIEFSPPVPHGREGSKLGFVVMVLIDDGKKSVIHASDTQLINEKAVKWIIEKNPDLLIAGGPPTYLTHRVGNVRDIGRELINRIINETNAELIIDHHIVRDKGYEEFFNSLDKRPLTFAEFLGRENAPLEAYRKELHEFEKGKDVELPKGIVKFLKELGEQK.

Belongs to the UPF0282 family.

The sequence is that of UPF0282 protein PF0593 from Pyrococcus furiosus (strain ATCC 43587 / DSM 3638 / JCM 8422 / Vc1).